Here is a 1110-residue protein sequence, read N- to C-terminus: Guanylate cyclase 2D (1110 aa).

An N-terminal signal peptide occupies residues 1–66 (MAGLQQGCHP…ADSLSLPAWA (66 aa)). The Extracellular portion of the chain corresponds to 67–475 (RETFTLGVLG…PNTLCIRGVQ (409 aa)). Residues Cys-121 and Cys-149 are joined by a disulfide bond. Asn-304 and Asn-374 each carry an N-linked (GlcNAc...) asparagine glycan. A helical transmembrane segment spans residues 476–500 (PLGSLLTLTITCVLALVGGFLAYFI). The Cytoplasmic portion of the chain corresponds to 501–1110 (RLGLQQLRLL…TGFAKLARVG (610 aa)). The tract at residues 529–556 (TPSRRRPHVDSGSESRSVVDGGSPQSVI) is disordered. One can recognise a Protein kinase domain in the interval 541–818 (SESRSVVDGG…PSLDQIYTQF (278 aa)). Positions 880–921 (MGTTVEPEYFDQVTIYFSDIVGFTTISALSEPIEVVGFLNDL) are interaction with NCALD. The region spanning 893-1023 (TIYFSDIVGF…DTVNTASRME (131 aa)) is the Guanylate cyclase domain.

Belongs to the adenylyl cyclase class-4/guanylyl cyclase family. As to quaternary structure, interacts (via the catalytic domain) with NCALD. In terms of tissue distribution, specifically expressed in a subpopulation of olfactory sensory neurons. Expressed in the cilia of the olfactory epithelium.

It localises to the cell projection. It is found in the cilium membrane. It carries out the reaction GTP = 3',5'-cyclic GMP + diphosphate. Its activity is regulated as follows. Activated by Ca(2+). Activated by NCALD in a Ca(2+)-dependent fashion. In terms of biological role, functions as an olfactory receptor activated by a urine odorant, uroguanylin. Activated as well by the volatile semiochemicals carbon disulfide (CS2) and carbon dioxide (CO2). Has guanylate cyclase activity upon binding of the ligand. Activation of GUCY2D neurons leads to the cGMP-dependent activation of the CNGA3 channels, membrane depolarization and an increase in action potential frequency. Signaling pathways activated by GUCY2D may trigger social behaviors such as acquisition of food preference. This chain is Guanylate cyclase 2D (Gucy2d), found in Rattus norvegicus (Rat).